Here is a 399-residue protein sequence, read N- to C-terminus: Tryptophan synthase beta chain (399 aa).

Residue lysine 92 is modified to N6-(pyridoxal phosphate)lysine.

Belongs to the TrpB family. In terms of assembly, tetramer of two alpha and two beta chains. Pyridoxal 5'-phosphate is required as a cofactor.

The catalysed reaction is (1S,2R)-1-C-(indol-3-yl)glycerol 3-phosphate + L-serine = D-glyceraldehyde 3-phosphate + L-tryptophan + H2O. It participates in amino-acid biosynthesis; L-tryptophan biosynthesis; L-tryptophan from chorismate: step 5/5. In terms of biological role, the beta subunit is responsible for the synthesis of L-tryptophan from indole and L-serine. This chain is Tryptophan synthase beta chain, found in Acidithiobacillus ferrooxidans (strain ATCC 23270 / DSM 14882 / CIP 104768 / NCIMB 8455) (Ferrobacillus ferrooxidans (strain ATCC 23270)).